The chain runs to 722 residues: Mating-type switching protein swi2 (722 aa).

Disordered regions lie at residues 1 to 35 (MNVNKKQESIPVNTGSESISSNDNERFEQGKGVGS) and 301 to 342 (SEEF…PLPS). Residues 9–22 (SIPVNTGSESISSN) show a composition bias toward polar residues. Acidic residues predominate over residues 302-316 (EEFDFEPSREDEDFP). Polar residues predominate over residues 319-332 (TSDSTGQDPLSSEP).

As to quaternary structure, interacts with swi5 and rhp51.

Its function is as follows. Required for normal mating-type switching. This is Mating-type switching protein swi2 (swi2) from Schizosaccharomyces pombe (strain 972 / ATCC 24843) (Fission yeast).